The sequence spans 262 residues: uncharacterized protein (262 aa).

Helical transmembrane passes span 42 to 62 (IAKF…TVLN), 71 to 91 (IINI…LLYF), 115 to 135 (IGLA…MELI), 145 to 165 (VVSY…CCFN), 185 to 205 (LWAY…YSNH), 206 to 226 (PLMI…PFMI), and 235 to 255 (AYPS…NYAI).

It localises to the membrane. This is an uncharacterized protein from Acanthamoeba polyphaga mimivirus (APMV).